Consider the following 162-residue polypeptide: MFDIGFSELILIFVVGLVVLGPQRLPVAIRTVMGWVRTIRSLATNVQHELAQELKLQELQESIKKAEAMNLTTLSPELTQTVEDLKQSAQKMQNDLNNANQIGKLTDEQVADIQQNIANAQPSEITEANELDESKLTAYYPPDDDLVSPSTTKLEQDKQNVN.

The helical transmembrane segment at 1–21 (MFDIGFSELILIFVVGLVVLG) threads the bilayer. The disordered stretch occupies residues 136–162 (LTAYYPPDDDLVSPSTTKLEQDKQNVN).

This sequence belongs to the TatB family. In terms of assembly, the Tat system comprises two distinct complexes: a TatABC complex, containing multiple copies of TatA, TatB and TatC subunits, and a separate TatA complex, containing only TatA subunits. Substrates initially bind to the TatABC complex, which probably triggers association of the separate TatA complex to form the active translocon.

Its subcellular location is the cell inner membrane. Its function is as follows. Part of the twin-arginine translocation (Tat) system that transports large folded proteins containing a characteristic twin-arginine motif in their signal peptide across membranes. Together with TatC, TatB is part of a receptor directly interacting with Tat signal peptides. TatB may form an oligomeric binding site that transiently accommodates folded Tat precursor proteins before their translocation. The sequence is that of Sec-independent protein translocase protein TatB from Haemophilus ducreyi (strain 35000HP / ATCC 700724).